A 1146-amino-acid polypeptide reads, in one-letter code: Error-prone DNA polymerase (1146 aa).

Disordered regions lie at residues M1–K43 and A154–P178. Residues E12–P26 show a composition bias toward basic and acidic residues.

It belongs to the DNA polymerase type-C family. DnaE2 subfamily.

It localises to the cytoplasm. It carries out the reaction DNA(n) + a 2'-deoxyribonucleoside 5'-triphosphate = DNA(n+1) + diphosphate. Functionally, DNA polymerase involved in damage-induced mutagenesis and translesion synthesis (TLS). It is not the major replicative DNA polymerase. The protein is Error-prone DNA polymerase of Nocardia farcinica (strain IFM 10152).